The following is a 254-amino-acid chain: Hydroxyethylthiazole kinase (254 aa).

Residue Met40 coordinates substrate. Residues Arg116 and Ser162 each coordinate ATP. Gly189 lines the substrate pocket.

The protein belongs to the Thz kinase family. The cofactor is Mg(2+).

The enzyme catalyses 5-(2-hydroxyethyl)-4-methylthiazole + ATP = 4-methyl-5-(2-phosphooxyethyl)-thiazole + ADP + H(+). It participates in cofactor biosynthesis; thiamine diphosphate biosynthesis; 4-methyl-5-(2-phosphoethyl)-thiazole from 5-(2-hydroxyethyl)-4-methylthiazole: step 1/1. Functionally, catalyzes the phosphorylation of the hydroxyl group of 4-methyl-5-beta-hydroxyethylthiazole (THZ). The sequence is that of Hydroxyethylthiazole kinase from Limosilactobacillus fermentum (strain NBRC 3956 / LMG 18251) (Lactobacillus fermentum).